The sequence spans 86 residues: ATP synthase subunit c (86 aa).

Transmembrane regions (helical) follow at residues 4 to 24 and 57 to 77; these read AIVA…GIGA and VAIA…LLFV.

This sequence belongs to the ATPase C chain family. F-type ATPases have 2 components, F(1) - the catalytic core - and F(0) - the membrane proton channel. F(1) has five subunits: alpha(3), beta(3), gamma(1), delta(1), epsilon(1). F(0) has three main subunits: a(1), b(2) and c(10-14). The alpha and beta chains form an alternating ring which encloses part of the gamma chain. F(1) is attached to F(0) by a central stalk formed by the gamma and epsilon chains, while a peripheral stalk is formed by the delta and b chains.

Its subcellular location is the cell membrane. In terms of biological role, f(1)F(0) ATP synthase produces ATP from ADP in the presence of a proton or sodium gradient. F-type ATPases consist of two structural domains, F(1) containing the extramembraneous catalytic core and F(0) containing the membrane proton channel, linked together by a central stalk and a peripheral stalk. During catalysis, ATP synthesis in the catalytic domain of F(1) is coupled via a rotary mechanism of the central stalk subunits to proton translocation. Key component of the F(0) channel; it plays a direct role in translocation across the membrane. A homomeric c-ring of between 10-14 subunits forms the central stalk rotor element with the F(1) delta and epsilon subunits. The polypeptide is ATP synthase subunit c (Clostridioides difficile (strain 630) (Peptoclostridium difficile)).